A 408-amino-acid chain; its full sequence is NADH-quinone oxidoreductase subunit D (408 aa).

It belongs to the complex I 49 kDa subunit family. NDH-1 is composed of 14 different subunits. Subunits NuoB, C, D, E, F, and G constitute the peripheral sector of the complex.

Its subcellular location is the cell inner membrane. It catalyses the reaction a quinone + NADH + 5 H(+)(in) = a quinol + NAD(+) + 4 H(+)(out). In terms of biological role, NDH-1 shuttles electrons from NADH, via FMN and iron-sulfur (Fe-S) centers, to quinones in the respiratory chain. The immediate electron acceptor for the enzyme in this species is believed to be ubiquinone. Couples the redox reaction to proton translocation (for every two electrons transferred, four hydrogen ions are translocated across the cytoplasmic membrane), and thus conserves the redox energy in a proton gradient. This chain is NADH-quinone oxidoreductase subunit D, found in Campylobacter jejuni subsp. doylei (strain ATCC BAA-1458 / RM4099 / 269.97).